A 144-amino-acid polypeptide reads, in one-letter code: Complexin-1 (144 aa).

Over residues 1–10 (MVSFLGGGLL) the composition is skewed to gly residues. The tract at residues 1–119 (MVSFLGGGLL…SGFPKNLDDL (119 aa)) is disordered. Composition is skewed to basic and acidic residues over residues 18–27 (LEEKEDKKEG) and 36–86 (AEAK…EGRL). Positions 29–67 (EEEDPEIAEAKREAEEKRNEKYRKMEEEREVMRQGIRDK) form a coiled coil. Positions 103-112 (LQSSAQSSGF) are enriched in polar residues. Residue Cys141 is modified to Cysteine methyl ester. Cys141 carries the S-farnesyl cysteine lipid modification. A propeptide spans 142–144 (NLQ) (removed in mature form).

Belongs to the complexin/synaphin family. Binds to the SNARE core complex containing SNAP25, synaptobrevin and syntaxin-1. Expressed in a subset of neurons in the central nervous system, including large serotoninergic Retzius neurons and pressure-sensitive P cells.

Its subcellular location is the membrane. Positively regulates a late step in synaptic vesicle exocytosis. This Hirudo medicinalis (Medicinal leech) protein is Complexin-1 (cpx1).